The primary structure comprises 432 residues: Acetylserotonin O-methyltransferase (432 aa).

Residues Tyr146, Trp163, Asp209, 235–237, and Arg252 contribute to the S-adenosyl-L-methionine site; that span reads GDF. Catalysis depends on His255, which acts as the Proton donor/acceptor. Substrate contacts are provided by Asp256, Asn302, and Gln306. The tract at residues 373–432 is disordered; that stretch reads VPGARSDAAGTGSGTGNTGSGIMLQGETLESEVSAPQAGSDVGGAGNEPRSGTLKQGDWK.

Belongs to the class I-like SAM-binding methyltransferase superfamily. Cation-independent O-methyltransferase family. As to quaternary structure, homodimer. Expressed predominantly in the pineal gland (at protein level). Very low expression, if any, in the retina.

It carries out the reaction N-acetylserotonin + S-adenosyl-L-methionine = melatonin + S-adenosyl-L-homocysteine + H(+). The protein operates within aromatic compound metabolism; melatonin biosynthesis; melatonin from serotonin: step 1/2. Catalyzes the transfer of a methyl group onto N-acetylserotonin, producing melatonin (N-acetyl-5-methoxytryptamine). This is Acetylserotonin O-methyltransferase (Asmt) from Rattus norvegicus (Rat).